Consider the following 451-residue polypeptide: REST corepressor 3 (451 aa).

Residues 1–55 are disordered; it reads MPGMMEKGPELLGKSRSANGGAKSPAGGGGSSANGGLHFSEPESGCSSDDEHGDV. The region spanning 55–139 is the ELM2 domain; the sequence is VGMRVGAEYQ…KSLADLPNFT (85 aa). Lysine 76 participates in a covalent cross-link: Glycyl lysine isopeptide (Lys-Gly) (interchain with G-Cter in SUMO2). The SANT domain occupies 140–191; the sequence is PFPDEWTVEDKVLFEQAFSFHGKSFHRIQQMLPDKTIASLVKYYYSWKKTRS. Residues 204-275 form a disordered region; sequence ANRHNQGDSD…SQRSKCRPPK (72 aa). A phosphoserine mark is found at serine 212 and serine 227. A compositionally biased stretch (basic and acidic residues) spans 218 to 240; it reads EAHPMDGNDSDYDPKKEAKREGN. A Glycyl lysine isopeptide (Lys-Gly) (interchain with G-Cter in SUMO2) cross-link involves residue lysine 249. A compositionally biased stretch (basic residues) spans 261–273; sequence QHRHHSQRSKCRP. A coiled-coil region spans residues 293-329; sequence AANTILRQLDMELISLKRQVQNAKQVNSALKQKMEGG. The disordered stretch occupies residues 333–451; sequence FKPPEAQTPQ…IQTDSQPSLH (119 aa). The segment covering 349 to 361 has biased composition (pro residues); the sequence is PSPPAPSSTPTPT. Positions 375–384 are enriched in low complexity; it reads RPTLPAAPAL. Arginine 401 and arginine 413 each carry asymmetric dimethylarginine. Residues 431–451 show a composition bias toward polar residues; it reads VGGQQPPSLIGIQTDSQPSLH.

It belongs to the CoREST family.

It is found in the nucleus. In terms of biological role, may act as a component of a corepressor complex that represses transcription. The sequence is that of REST corepressor 3 (Rcor3) from Mus musculus (Mouse).